The chain runs to 254 residues: Bowman-Birk type bran trypsin inhibitor (254 aa).

A signal peptide spans 1 to 22; the sequence is MSNTTMATSTILLFLLAGLAAA. The propeptide occupies 23–118; that stretch reads HGDGDTTIRL…KCTAALDGLS (96 aa). 3 consecutive repeats follow at residues 46-120, 121-187, and 188-251; these read KPWD…LSME, RPWK…FCTP, and RPWG…CKPR. Cystine bridges form between Cys125-Cys185, Cys126-Cys143, Cys152-Cys159, Cys156-Cys172, Cys193-Cys248, Cys194-Cys209, Cys199-Cys207, Cys216-Cys223, and Cys220-Cys236. A propeptide spanning residues 252–254 is cleaved from the precursor; it reads AEN.

This sequence belongs to the Bowman-Birk serine protease inhibitor family.

In Oryza sativa subsp. japonica (Rice), this protein is Bowman-Birk type bran trypsin inhibitor (RBBI3.3).